Consider the following 451-residue polypeptide: D-inositol 3-phosphate glycosyltransferase (451 aa).

His-21 lines the 1D-myo-inositol 3-phosphate pocket. UDP-N-acetyl-alpha-D-glucosamine contacts are provided by residues 27-28 and Gly-35; that span reads QP. 1D-myo-inositol 3-phosphate-binding positions include 32–37, Lys-90, Tyr-123, Thr-147, and Arg-167; that span reads DAGGMN. 3 residues coordinate UDP-N-acetyl-alpha-D-glucosamine: Arg-241, Lys-246, and Gln-305. Mg(2+) is bound by residues Tyr-314, Arg-315, and Ala-317. Residues Glu-327 and Glu-335 each contribute to the UDP-N-acetyl-alpha-D-glucosamine site. Thr-341 contacts Mg(2+).

It belongs to the glycosyltransferase group 1 family. MshA subfamily. As to quaternary structure, homodimer.

It catalyses the reaction 1D-myo-inositol 3-phosphate + UDP-N-acetyl-alpha-D-glucosamine = 1D-myo-inositol 2-acetamido-2-deoxy-alpha-D-glucopyranoside 3-phosphate + UDP + H(+). Catalyzes the transfer of a N-acetyl-glucosamine moiety to 1D-myo-inositol 3-phosphate to produce 1D-myo-inositol 2-acetamido-2-deoxy-glucopyranoside 3-phosphate in the mycothiol biosynthesis pathway. This is D-inositol 3-phosphate glycosyltransferase from Nocardia farcinica (strain IFM 10152).